Consider the following 59-residue polypeptide: Venom protein 27.7 (59 aa).

The signal sequence occupies residues 1-29 (MTFITLTIGLSLRTIFLIFIFLPPPHLLA).

Belongs to the non-disulfide-bridged peptide (NDBP) superfamily. In terms of tissue distribution, expressed by the venom gland.

The protein resides in the secreted. The chain is Venom protein 27.7 from Lychas mucronatus (Chinese swimming scorpion).